Consider the following 191-residue polypeptide: Nascent polypeptide-associated complex subunit alpha (191 aa).

An NAC-A/B domain is found at 24–89 (SRPERKARKA…AKVEDPNSAA (66 aa)). The disordered stretch occupies residues 126-149 (QDAPSADSSAPAPSGEATDASASG). A compositionally biased stretch (low complexity) spans 127–139 (DAPSADSSAPAPS). A UBA domain is found at 153–191 (VSDEEIQLIVAQTGVDEAKAREAYISEKGDLINAIMKLQ).

The protein belongs to the NAC-alpha family. Part of the nascent polypeptide-associated complex (NAC), consisting of EGD2 and EGD1. NAC associates with ribosomes via EGD1.

The protein localises to the cytoplasm. It localises to the nucleus. Functionally, component of the nascent polypeptide-associated complex (NAC), a dynamic component of the ribosomal exit tunnel, protecting the emerging polypeptides from interaction with other cytoplasmic proteins to ensure appropriate nascent protein targeting. The NAC complex also promotes mitochondrial protein import by enhancing productive ribosome interactions with the outer mitochondrial membrane and blocks the inappropriate interaction of ribosomes translating non-secretory nascent polypeptides with translocation sites in the membrane of the endoplasmic reticulum. EGD2 may also be involved in transcription regulation. In Cryptococcus neoformans var. neoformans serotype D (strain B-3501A) (Filobasidiella neoformans), this protein is Nascent polypeptide-associated complex subunit alpha (EGD2).